A 345-amino-acid chain; its full sequence is Uroporphyrinogen decarboxylase (345 aa).

Substrate is bound by residues 27–31 (RQAGR), phenylalanine 46, aspartate 76, tyrosine 152, serine 207, and histidine 321.

Belongs to the uroporphyrinogen decarboxylase family. In terms of assembly, homodimer.

It localises to the cytoplasm. It carries out the reaction uroporphyrinogen III + 4 H(+) = coproporphyrinogen III + 4 CO2. It functions in the pathway porphyrin-containing compound metabolism; protoporphyrin-IX biosynthesis; coproporphyrinogen-III from 5-aminolevulinate: step 4/4. Its function is as follows. Catalyzes the decarboxylation of four acetate groups of uroporphyrinogen-III to yield coproporphyrinogen-III. The chain is Uroporphyrinogen decarboxylase from Staphylococcus aureus (strain MRSA252).